The following is an 83-amino-acid chain: Protein CASPARIAN STRIP INTEGRITY FACTOR 1 (83 aa).

The first 22 residues, 1–22, serve as a signal peptide directing secretion; sequence MGMSPLTVKKLGFIFMIVSASA. The tract at residues 59–83 is disordered; it reads MNTKDYGNNSPSPRLERPPFKLIPN. Tyr64 bears the Sulfotyrosine mark. Hydroxyproline is present on residues Pro69 and Pro71.

Interacts with the specific receptor kinases GSO1 and GSO2. Expressed exclusively in the root stele.

Functionally, peptide hormone required for contiguous Casparian strip diffusion barrier formation in roots via the regulation of CASPs protein expression and distribution in a GSO1-GSO2 signaling pathway. The Casparian strip is required for ion homeostasis (e.g. iron and potassium ions). This chain is Protein CASPARIAN STRIP INTEGRITY FACTOR 1, found in Arabidopsis thaliana (Mouse-ear cress).